Reading from the N-terminus, the 295-residue chain is Ethanolamine ammonia-lyase small subunit (295 aa).

Adenosylcob(III)alamin-binding residues include Val207, Glu228, and Cys258.

Belongs to the EutC family. The basic unit is a heterodimer which dimerizes to form tetramers. The heterotetramers trimerize; 6 large subunits form a core ring with 6 small subunits projecting outwards. Requires adenosylcob(III)alamin as cofactor.

The protein localises to the bacterial microcompartment. It catalyses the reaction ethanolamine = acetaldehyde + NH4(+). The protein operates within amine and polyamine degradation; ethanolamine degradation. Functionally, catalyzes the deamination of various vicinal amino-alcohols to oxo compounds. Allows this organism to utilize ethanolamine as the sole source of nitrogen and carbon in the presence of external vitamin B12. The sequence is that of Ethanolamine ammonia-lyase small subunit from Escherichia coli (strain SMS-3-5 / SECEC).